The primary structure comprises 457 residues: MDHLPIFCQLRDRDCLIVGGGDVAERKARLLLEAGARLTVNALTFIPQFTVWVNEGMLTLVEGPFDETLLDSCWLAIAATDDDTVNQRVSEAAESRRIFCNVVDAPKAASFIMPSIIDRSPLMVAVSSGGTSPVLARLLREKLESLLPQHLGQVARYAGQLRARVKKQFATMGERRRFWEKFFVNDRLAQSLANADEKAVNATTEHLFSEPLDHRGEVVLVGAGPGDAGLLTLKGLQQIQQADIVVYDRLVSDDIMNLVRRDADRVFVGKRAGYHCVPQEEINQILLREAQKGKRVVRLKGGDPFIFGRGGEELETLCHAGIPFSVVPGITAASGCSAYSGIPLTHRDYAQSVRLVTGHLKTGGELDWENLAAEKQTLVFYMGLNQAATIQEKLIAFGMEANMPVALVENGTSVKQRVVHGVLTQLGELAQQVESPALIIVGRVVALRDKLNWFSNH.

The precorrin-2 dehydrogenase /sirohydrochlorin ferrochelatase stretch occupies residues 1–204 (MDHLPIFCQL…ADEKAVNATT (204 aa)). Residues 22–23 (DV) and 43–44 (LT) each bind NAD(+). S128 carries the post-translational modification Phosphoserine. The segment at 216–457 (GEVVLVGAGP…RDKLNWFSNH (242 aa)) is uroporphyrinogen-III C-methyltransferase. P225 is a binding site for S-adenosyl-L-methionine. The active-site Proton acceptor is the D248. Catalysis depends on K270, which acts as the Proton donor. S-adenosyl-L-methionine is bound by residues 301–303 (GGD), I306, 331–332 (TA), M382, and G411.

It in the N-terminal section; belongs to the precorrin-2 dehydrogenase / sirohydrochlorin ferrochelatase family. The protein in the C-terminal section; belongs to the precorrin methyltransferase family.

The catalysed reaction is uroporphyrinogen III + 2 S-adenosyl-L-methionine = precorrin-2 + 2 S-adenosyl-L-homocysteine + H(+). It carries out the reaction precorrin-2 + NAD(+) = sirohydrochlorin + NADH + 2 H(+). The enzyme catalyses siroheme + 2 H(+) = sirohydrochlorin + Fe(2+). It participates in cofactor biosynthesis; adenosylcobalamin biosynthesis; precorrin-2 from uroporphyrinogen III: step 1/1. It functions in the pathway cofactor biosynthesis; adenosylcobalamin biosynthesis; sirohydrochlorin from precorrin-2: step 1/1. The protein operates within porphyrin-containing compound metabolism; siroheme biosynthesis; precorrin-2 from uroporphyrinogen III: step 1/1. Its pathway is porphyrin-containing compound metabolism; siroheme biosynthesis; siroheme from sirohydrochlorin: step 1/1. It participates in porphyrin-containing compound metabolism; siroheme biosynthesis; sirohydrochlorin from precorrin-2: step 1/1. In terms of biological role, multifunctional enzyme that catalyzes the SAM-dependent methylations of uroporphyrinogen III at position C-2 and C-7 to form precorrin-2 via precorrin-1. Then it catalyzes the NAD-dependent ring dehydrogenation of precorrin-2 to yield sirohydrochlorin. Finally, it catalyzes the ferrochelation of sirohydrochlorin to yield siroheme. The protein is Siroheme synthase of Salmonella typhi.